Here is a 183-residue protein sequence, read N- to C-terminus: Ran guanine nucleotide release factor (183 aa).

Positions 23 to 66 (ELRQIPDNQEVFAHSQTDQSIIIELLEYQSQVQDADAARYHFED) are interaction with RAN.

This sequence belongs to the MOG1 family. In terms of assembly, monomer. Interacts with ran.

The protein resides in the nucleus. The protein localises to the cytoplasm. It is found in the perinuclear region. Its subcellular location is the cell membrane. Functionally, may regulate the intracellular trafficking of RAN. Promotes guanine nucleotide release from RAN and inhibits binding of new GTP. Plays a role in the regulation of the levels of GTP-bound RAN in the nucleus. Required for normal expression of the ion channel hcn4 and for normal expression of the cardiac transcription factors nkx2.5, gata4 and hand2 during embryonic development. Required for normal embryonic heart development and normal heart rate. The chain is Ran guanine nucleotide release factor from Danio rerio (Zebrafish).